A 77-amino-acid chain; its full sequence is Acyl carrier protein (77 aa).

In terms of domain architecture, Carrier spans A2 to Q77. The residue at position 37 (S37) is an O-(pantetheine 4'-phosphoryl)serine.

Belongs to the acyl carrier protein (ACP) family. 4'-phosphopantetheine is transferred from CoA to a specific serine of apo-ACP by AcpS. This modification is essential for activity because fatty acids are bound in thioester linkage to the sulfhydryl of the prosthetic group.

It is found in the cytoplasm. It participates in lipid metabolism; fatty acid biosynthesis. Carrier of the growing fatty acid chain in fatty acid biosynthesis. In Bacillus subtilis (strain 168), this protein is Acyl carrier protein (acpA).